Here is a 335-residue protein sequence, read N- to C-terminus: Methionine import ATP-binding protein MetN (335 aa).

The ABC transporter domain occupies 2–241; that stretch reads IQFQRLHKSY…PKHATTRRFV (240 aa). An ATP-binding site is contributed by 38-45; sequence GHSGAGKS.

It belongs to the ABC transporter superfamily. Methionine importer (TC 3.A.1.24) family. As to quaternary structure, the complex is composed of two ATP-binding proteins (MetN), two transmembrane proteins (MetI) and a solute-binding protein (MetQ).

It is found in the cell inner membrane. The catalysed reaction is L-methionine(out) + ATP + H2O = L-methionine(in) + ADP + phosphate + H(+). It catalyses the reaction D-methionine(out) + ATP + H2O = D-methionine(in) + ADP + phosphate + H(+). Part of the ABC transporter complex MetNIQ involved in methionine import. Responsible for energy coupling to the transport system. This chain is Methionine import ATP-binding protein MetN, found in Xanthomonas axonopodis pv. citri (strain 306).